We begin with the raw amino-acid sequence, 714 residues long: ATP-dependent DNA helicase DinG (714 aa).

Positions 17–294 (ALQDQIPDFI…TSMEQFRPKT (278 aa)) constitute a Helicase ATP-binding domain. 54–61 (APTGVGKT) contacts ATP. Residues C120, C194, C199, and C205 each contribute to the [4Fe-4S] cluster site. Residues 248–251 (DEGH) carry the DEAH box motif. Residues 517 to 698 (HIAEMAAYFR…VFPIEQPAVP (182 aa)) enclose the Helicase C-terminal domain.

Belongs to the helicase family. DinG subfamily. Type 1 sub-subfamily. [4Fe-4S] cluster serves as cofactor.

The catalysed reaction is Couples ATP hydrolysis with the unwinding of duplex DNA at the replication fork by translocating in the 5'-3' direction. This creates two antiparallel DNA single strands (ssDNA). The leading ssDNA polymer is the template for DNA polymerase III holoenzyme which synthesizes a continuous strand.. It catalyses the reaction ATP + H2O = ADP + phosphate + H(+). Functionally, DNA-dependent ATPase and 5'-3' DNA helicase. Unwinds D-loops, R-loops, forked DNA and G-quadruplex DNA. In Salmonella choleraesuis (strain SC-B67), this protein is ATP-dependent DNA helicase DinG.